Consider the following 363-residue polypeptide: Dual-specificity RNA methyltransferase RlmN (363 aa).

The Proton acceptor role is filled by Glu102. In terms of domain architecture, Radical SAM core spans Glu108–Ala349. A disulfide bond links Cys115 and Cys350. [4Fe-4S] cluster is bound by residues Cys122, Cys126, and Cys129. S-adenosyl-L-methionine is bound by residues Gly174–Glu175, Ser206, Ser228–His230, and Asn307. The S-methylcysteine intermediate role is filled by Cys350.

This sequence belongs to the radical SAM superfamily. RlmN family. [4Fe-4S] cluster is required as a cofactor.

The protein localises to the cytoplasm. It carries out the reaction adenosine(2503) in 23S rRNA + 2 reduced [2Fe-2S]-[ferredoxin] + 2 S-adenosyl-L-methionine = 2-methyladenosine(2503) in 23S rRNA + 5'-deoxyadenosine + L-methionine + 2 oxidized [2Fe-2S]-[ferredoxin] + S-adenosyl-L-homocysteine. The enzyme catalyses adenosine(37) in tRNA + 2 reduced [2Fe-2S]-[ferredoxin] + 2 S-adenosyl-L-methionine = 2-methyladenosine(37) in tRNA + 5'-deoxyadenosine + L-methionine + 2 oxidized [2Fe-2S]-[ferredoxin] + S-adenosyl-L-homocysteine. Its function is as follows. Specifically methylates position 2 of adenine 2503 in 23S rRNA and position 2 of adenine 37 in tRNAs. m2A2503 modification seems to play a crucial role in the proofreading step occurring at the peptidyl transferase center and thus would serve to optimize ribosomal fidelity. This chain is Dual-specificity RNA methyltransferase RlmN, found in Buchnera aphidicola subsp. Schizaphis graminum (strain Sg).